The primary structure comprises 84 residues: Large ribosomal subunit protein bL27 (84 aa).

This sequence belongs to the bacterial ribosomal protein bL27 family.

The chain is Large ribosomal subunit protein bL27 from Buchnera aphidicola subsp. Acyrthosiphon pisum (strain Tuc7).